Reading from the N-terminus, the 51-residue chain is Large ribosomal subunit protein eL39 (51 aa).

It belongs to the eukaryotic ribosomal protein eL39 family.

The chain is Large ribosomal subunit protein eL39 from Picrophilus torridus (strain ATCC 700027 / DSM 9790 / JCM 10055 / NBRC 100828 / KAW 2/3).